We begin with the raw amino-acid sequence, 163 residues long: Neurotrophin-3 (163 aa).

A signal peptide spans I1–S3. Residues T4–R119 constitute a propeptide that is removed on maturation. N112 carries N-linked (GlcNAc...) asparagine glycosylation.

This sequence belongs to the NGF-beta family.

It is found in the secreted. Its function is as follows. Seems to promote the survival of visceral and proprioceptive sensory neurons. This Eryx conicus (Rough-scaled sand boa) protein is Neurotrophin-3 (NTF3).